A 130-amino-acid chain; its full sequence is Small ribosomal subunit protein uS11 (130 aa).

This sequence belongs to the universal ribosomal protein uS11 family. As to quaternary structure, part of the 30S ribosomal subunit. Interacts with proteins S7 and S18. Binds to IF-3.

Located on the platform of the 30S subunit, it bridges several disparate RNA helices of the 16S rRNA. Forms part of the Shine-Dalgarno cleft in the 70S ribosome. In Ruegeria pomeroyi (strain ATCC 700808 / DSM 15171 / DSS-3) (Silicibacter pomeroyi), this protein is Small ribosomal subunit protein uS11.